Reading from the N-terminus, the 128-residue chain is Large ribosomal subunit protein bL17 (128 aa).

It belongs to the bacterial ribosomal protein bL17 family. Part of the 50S ribosomal subunit. Contacts protein L32.

The protein is Large ribosomal subunit protein bL17 of Streptococcus suis (strain 98HAH33).